We begin with the raw amino-acid sequence, 902 residues long: Gamma-tubulin complex component 2 (902 aa).

A Phosphotyrosine modification is found at Y83. Residues 874–902 (AERSQKATPQVPVLRGPPAPAPRVAVTAQ) form a disordered region.

It belongs to the TUBGCP family. As to quaternary structure, component of the gamma-tubulin ring complex (gTuRC) consisting of TUBGCP2, TUBGCP3, TUBGCP4, TUBGCP5 and TUBGCP6 and gamma-tubulin TUBG1 or TUBG2. TUBGCP2, TUBGCP3, TUBGCP4, TUBGCP5 and TUBGCP6 assemble in a 5:5:2:1:1 stoichiometry; each is associated with a gamma-tubulin, thereby arranging 14 gamma-tubulins in a helical manner. Gamma-tubulin at the first position is blocked by TUBGCP3 at the last position, allowing 13 protafilaments to grow into a microtubule. The gTuRC (via TUBGCP3 and TUBGCP6) interacts with ACTB and MZT1; the interactions form a luminal bridge that stabilizes the initial structure during complex assembly. The gTuRC (via TUBGCP2) interacts with MZT2A/MZT2B and CDK5RAP2 (via CM1 motif); the interactions play a role in gTuRC activation. Interacts with ATF5; the ATF5:PCNT:polyglutamylated tubulin (PGT) tripartite unites the mother centriole and the pericentriolar material (PCM) in the centrosome. In terms of tissue distribution, ubiquitously expressed.

Its subcellular location is the cytoplasm. It is found in the cytoskeleton. The protein resides in the microtubule organizing center. It localises to the centrosome. Functionally, component of the gamma-tubulin ring complex (gTuRC) which mediates microtubule nucleation. The gTuRC regulates the minus-end nucleation of alpha-beta tubulin heterodimers that grow into microtubule protafilaments, a critical step in centrosome duplication and spindle formation. Plays a role in neuronal migration. The protein is Gamma-tubulin complex component 2 (TUBGCP2) of Homo sapiens (Human).